Reading from the N-terminus, the 363-residue chain is tRNA N6-adenosine threonylcarbamoyltransferase (363 aa).

2 residues coordinate Fe cation: His121 and His125. Substrate-binding positions include 143–147 (LASGG), Asp176, Gly189, and Asn287. Residue Asp315 coordinates Fe cation.

It belongs to the KAE1 / TsaD family. Fe(2+) is required as a cofactor.

Its subcellular location is the cytoplasm. The enzyme catalyses L-threonylcarbamoyladenylate + adenosine(37) in tRNA = N(6)-L-threonylcarbamoyladenosine(37) in tRNA + AMP + H(+). Required for the formation of a threonylcarbamoyl group on adenosine at position 37 (t(6)A37) in tRNAs that read codons beginning with adenine. Is involved in the transfer of the threonylcarbamoyl moiety of threonylcarbamoyl-AMP (TC-AMP) to the N6 group of A37, together with TsaE and TsaB. TsaD likely plays a direct catalytic role in this reaction. The protein is tRNA N6-adenosine threonylcarbamoyltransferase of Rhodopseudomonas palustris (strain TIE-1).